Here is an 88-residue protein sequence, read N- to C-terminus: uncharacterized protein (88 aa).

This is an uncharacterized protein from Thermoproteus tenax virus 1 (strain KRA1) (TTV1).